Reading from the N-terminus, the 125-residue chain is Upsalin (125 aa).

A signal peptide spans 1 to 16 (MFPTHVLLIVIACVTA).

In terms of processing, weakly glycosylated. Expressed at highest levels in mantle, followed by adductor muscle. Found in the nacreous shell layer (at protein level).

It localises to the secreted. The polypeptide is Upsalin (Unio pictorum (Painter's mussel)).